We begin with the raw amino-acid sequence, 124 residues long: Small ribosomal subunit protein uS12 (124 aa).

Aspartate 89 is modified (3-methylthioaspartic acid). The disordered stretch occupies residues 102–124 (LDTSGVNNRKHGRSKYGTKRPKS). Residues 109 to 124 (NRKHGRSKYGTKRPKS) are compositionally biased toward basic residues.

It belongs to the universal ribosomal protein uS12 family. Part of the 30S ribosomal subunit. Contacts proteins S8 and S17. May interact with IF1 in the 30S initiation complex.

Functionally, with S4 and S5 plays an important role in translational accuracy. In terms of biological role, interacts with and stabilizes bases of the 16S rRNA that are involved in tRNA selection in the A site and with the mRNA backbone. Located at the interface of the 30S and 50S subunits, it traverses the body of the 30S subunit contacting proteins on the other side and probably holding the rRNA structure together. The combined cluster of proteins S8, S12 and S17 appears to hold together the shoulder and platform of the 30S subunit. The polypeptide is Small ribosomal subunit protein uS12 (Francisella tularensis subsp. novicida (strain U112)).